The primary structure comprises 397 residues: Yellow-related salivary protein LJM111 (397 aa).

A signal peptide spans 1–18 (MKLFFFLYTFGLVQTIFG).

This sequence belongs to the major royal jelly protein family. As to expression, salivary gland (at protein level).

The protein localises to the secreted. Probably modulates blood feeding of sand flies on vertebrate species by binding and sequestering different mediators involved in the host response. Binds biogenic amines. Binds adrenaline and noradrenaline with high affinity. Binds serotonin. Binds dopamine and octopamine. Exhibits anti-inflammatory effects in the host: reduces IL17A, TNF-alpha (TNF) and IFN-gamma (IFNG) production by host lymph node cells, suppresses expression of MHC-II and CD86, reduces TNF-alpha production and increases IL10 production, in host bone marrow-derived dendritic cells (BMDCs) stimulated by lipopolysaccharides. Reduces pain in mouse mechanical hypernociception model. This is Yellow-related salivary protein LJM111 from Lutzomyia longipalpis (Sand fly).